The following is a 606-amino-acid chain: Methionine--tRNA ligase (606 aa).

Residues 14-24 carry the 'HIGH' region motif; sequence PYANGPRHIGH. Positions 146, 149, 159, and 162 each coordinate Zn(2+). Residues 351–355 carry the 'KMSKS' region motif; sequence KFSSS. Ser-354 is a binding site for ATP.

The protein belongs to the class-I aminoacyl-tRNA synthetase family. MetG type 1 subfamily. Monomer. Requires Zn(2+) as cofactor.

Its subcellular location is the cytoplasm. It catalyses the reaction tRNA(Met) + L-methionine + ATP = L-methionyl-tRNA(Met) + AMP + diphosphate. Its function is as follows. Is required not only for elongation of protein synthesis but also for the initiation of all mRNA translation through initiator tRNA(fMet) aminoacylation. The protein is Methionine--tRNA ligase of Thermobifida fusca (strain YX).